The primary structure comprises 1167 residues: Carbamoyl phosphate synthase large chain (1167 aa).

Residues 1 to 455 (MPRRTDIKSI…SLQKALRGLE (455 aa)) form a carboxyphosphate synthetic domain region. Residues Arg-129, Arg-221, Gly-227, Gly-228, Glu-260, Val-262, Glu-267, Gly-293, Val-294, His-295, Gln-337, and Glu-351 each contribute to the ATP site. The region spanning 184 to 380 (LETRWNLGEG…IAKIAAKLAV (197 aa)) is the ATP-grasp 1 domain. Mg(2+)-binding residues include Gln-337, Glu-351, and Asn-353. Mn(2+) is bound by residues Gln-337, Glu-351, and Asn-353. Residues 456 to 619 (TGLTGLDEIE…PFAGALANEA (164 aa)) are oligomerization domain. The tract at residues 620 to 1031 (QVSSRKKVVI…AFAKSQLGAG (412 aa)) is carbamoyl phosphate synthetic domain. The 213-residue stretch at 748–960 (QKLLHKLGLS…IAKIAARIMA (213 aa)) folds into the ATP-grasp 2 domain. ATP contacts are provided by Arg-784, Thr-844, Leu-846, Glu-851, Gly-876, Ile-877, His-878, Ser-879, Gln-919, and Glu-931. Mg(2+) contacts are provided by Gln-919, Glu-931, and Asn-933. Positions 919, 931, and 933 each coordinate Mn(2+). Residues 1032 to 1167 (VDLPRSGTLF…EVRPLQEYFA (136 aa)) enclose the MGS-like domain. Positions 1032 to 1167 (VDLPRSGTLF…EVRPLQEYFA (136 aa)) are allosteric domain.

It belongs to the CarB family. As to quaternary structure, composed of two chains; the small (or glutamine) chain promotes the hydrolysis of glutamine to ammonia, which is used by the large (or ammonia) chain to synthesize carbamoyl phosphate. Tetramer of heterodimers (alpha,beta)4. It depends on Mg(2+) as a cofactor. Mn(2+) serves as cofactor.

The catalysed reaction is hydrogencarbonate + L-glutamine + 2 ATP + H2O = carbamoyl phosphate + L-glutamate + 2 ADP + phosphate + 2 H(+). It carries out the reaction hydrogencarbonate + NH4(+) + 2 ATP = carbamoyl phosphate + 2 ADP + phosphate + 2 H(+). It participates in amino-acid biosynthesis; L-arginine biosynthesis; carbamoyl phosphate from bicarbonate: step 1/1. The protein operates within pyrimidine metabolism; UMP biosynthesis via de novo pathway; (S)-dihydroorotate from bicarbonate: step 1/3. Functionally, large subunit of the glutamine-dependent carbamoyl phosphate synthetase (CPSase). CPSase catalyzes the formation of carbamoyl phosphate from the ammonia moiety of glutamine, carbonate, and phosphate donated by ATP, constituting the first step of 2 biosynthetic pathways, one leading to arginine and/or urea and the other to pyrimidine nucleotides. The large subunit (synthetase) binds the substrates ammonia (free or transferred from glutamine from the small subunit), hydrogencarbonate and ATP and carries out an ATP-coupled ligase reaction, activating hydrogencarbonate by forming carboxy phosphate which reacts with ammonia to form carbamoyl phosphate. This Mesorhizobium japonicum (strain LMG 29417 / CECT 9101 / MAFF 303099) (Mesorhizobium loti (strain MAFF 303099)) protein is Carbamoyl phosphate synthase large chain.